A 278-amino-acid chain; its full sequence is Tryptophan synthase alpha chain (278 aa).

Residues glutamate 50 and aspartate 61 each act as proton acceptor in the active site.

It belongs to the TrpA family. Tetramer of two alpha and two beta chains.

The enzyme catalyses (1S,2R)-1-C-(indol-3-yl)glycerol 3-phosphate + L-serine = D-glyceraldehyde 3-phosphate + L-tryptophan + H2O. It participates in amino-acid biosynthesis; L-tryptophan biosynthesis; L-tryptophan from chorismate: step 5/5. Functionally, the alpha subunit is responsible for the aldol cleavage of indoleglycerol phosphate to indole and glyceraldehyde 3-phosphate. The polypeptide is Tryptophan synthase alpha chain (Methylorubrum populi (strain ATCC BAA-705 / NCIMB 13946 / BJ001) (Methylobacterium populi)).